The chain runs to 322 residues: Pantothenate kinase (322 aa).

Residue 104 to 111 coordinates ATP; it reads GSVAVGKS.

Belongs to the prokaryotic pantothenate kinase family.

It localises to the cytoplasm. It carries out the reaction (R)-pantothenate + ATP = (R)-4'-phosphopantothenate + ADP + H(+). It participates in cofactor biosynthesis; coenzyme A biosynthesis; CoA from (R)-pantothenate: step 1/5. The polypeptide is Pantothenate kinase (Leifsonia xyli subsp. xyli (strain CTCB07)).